A 437-amino-acid chain; its full sequence is GTP-binding protein ERG (437 aa).

Positions 39–50 (QPNLDEPTSINE) are enriched in polar residues. A disordered region spans residues 39-65 (QPNLDEPTSINEDGSSSDSVFDSSQYP). Positions 51-62 (DGSSSDSVFDSS) are enriched in low complexity. Phosphoserine occurs at positions 111 and 112. Residues 152 to 333 (KSLNVGIIGP…LMDQAVKKPW (182 aa)) form the Era-type G domain. The interval 160–167 (GPPNAGKS) is G1. 160-167 (GPPNAGKS) lines the GTP pocket. Positions 186 to 190 (NTTTH) are G2. Residues 207-210 (DTPG) are G3. Residues 207–211 (DTPGL) and 279–282 (NKVD) each bind GTP. Residues 279–282 (NKVD) form a G4 region. Positions 309–311 (ISG) are G5. Residues 361–437 (VHQEIPYGLE…VHLILQVKLK (77 aa)) enclose the KH type-2 domain.

It belongs to the TRAFAC class TrmE-Era-EngA-EngB-Septin-like GTPase superfamily. Era GTPase family.

Has a crucial role in plant growth and development, possibly by influencing mitochondrial division. The protein is GTP-binding protein ERG (ERG) of Arabidopsis thaliana (Mouse-ear cress).